A 370-amino-acid chain; its full sequence is DNA replication and repair protein RecF (370 aa).

Residue 30–37 coordinates ATP; it reads GQNGMGKT.

It belongs to the RecF family.

Its subcellular location is the cytoplasm. Functionally, the RecF protein is involved in DNA metabolism; it is required for DNA replication and normal SOS inducibility. RecF binds preferentially to single-stranded, linear DNA. It also seems to bind ATP. This Bacteroides fragilis (strain YCH46) protein is DNA replication and repair protein RecF.